Reading from the N-terminus, the 684-residue chain is Glycine--tRNA ligase beta subunit (684 aa).

The protein belongs to the class-II aminoacyl-tRNA synthetase family. In terms of assembly, tetramer of two alpha and two beta subunits.

The protein localises to the cytoplasm. It catalyses the reaction tRNA(Gly) + glycine + ATP = glycyl-tRNA(Gly) + AMP + diphosphate. The polypeptide is Glycine--tRNA ligase beta subunit (Pseudomonas putida (strain ATCC 47054 / DSM 6125 / CFBP 8728 / NCIMB 11950 / KT2440)).